The primary structure comprises 434 residues: Enolase (434 aa).

Gln-163 contributes to the (2R)-2-phosphoglycerate binding site. Glu-205 acts as the Proton donor in catalysis. Positions 242, 291, and 318 each coordinate Mg(2+). 4 residues coordinate (2R)-2-phosphoglycerate: Lys-343, Arg-372, Ser-373, and Lys-394. Lys-343 (proton acceptor) is an active-site residue.

The protein belongs to the enolase family. Requires Mg(2+) as cofactor.

It localises to the cytoplasm. Its subcellular location is the secreted. It is found in the cell surface. It catalyses the reaction (2R)-2-phosphoglycerate = phosphoenolpyruvate + H2O. It participates in carbohydrate degradation; glycolysis; pyruvate from D-glyceraldehyde 3-phosphate: step 4/5. In terms of biological role, catalyzes the reversible conversion of 2-phosphoglycerate (2-PG) into phosphoenolpyruvate (PEP). It is essential for the degradation of carbohydrates via glycolysis. The chain is Enolase from Streptococcus pneumoniae serotype 19F (strain G54).